The primary structure comprises 176 residues: ATP-dependent protease subunit HslV (176 aa).

Thr-2 is an active-site residue. Na(+) is bound by residues Gly-157, Cys-160, and Thr-163.

The protein belongs to the peptidase T1B family. HslV subfamily. A double ring-shaped homohexamer of HslV is capped on each side by a ring-shaped HslU homohexamer. The assembly of the HslU/HslV complex is dependent on binding of ATP.

The protein resides in the cytoplasm. It catalyses the reaction ATP-dependent cleavage of peptide bonds with broad specificity.. Its activity is regulated as follows. Allosterically activated by HslU binding. Its function is as follows. Protease subunit of a proteasome-like degradation complex believed to be a general protein degrading machinery. The sequence is that of ATP-dependent protease subunit HslV from Marinobacter nauticus (strain ATCC 700491 / DSM 11845 / VT8) (Marinobacter aquaeolei).